The sequence spans 141 residues: MLQLCSTFRPQLLLPCQFRFTNGVLIPQINYVASNSVVNIRPMIRCQRASGGRGGANRSKPAKPQVKEGSNKTVIEGLVTESLPNGMFRVDLENGDNILGYICGKIRKNFIRILPGDKVKVEMSVYDSTKGRIIFRMSSRD.

Residues 1-46 constitute a chloroplast transit peptide; it reads MLQLCSTFRPQLLLPCQFRFTNGVLIPQINYVASNSVVNIRPMIRC. The disordered stretch occupies residues 49–69; the sequence is ASGGRGGANRSKPAKPQVKEG. Residues 63–138 enclose the S1-like domain; that stretch reads KPQVKEGSNK…TKGRIIFRMS (76 aa).

This sequence belongs to the IF-1 family. As to quaternary structure, component of the 30S ribosomal translation pre-initiation complex which assembles on the 30S ribosome in the order IF-2 and IF-3, IF-1 and N-formylmethionyl-tRNA(fMet); mRNA recruitment can occur at any time during PIC assembly.

It localises to the plastid. The protein resides in the chloroplast. In terms of biological role, one of the essential components for the initiation of protein synthesis. Stabilizes the binding of IF-2 and IF-3 on the 30S subunit to which N-formylmethionyl-tRNA(fMet) subsequently binds. Helps modulate mRNA selection, yielding the 30S pre-initiation complex (PIC). Upon addition of the 50S ribosomal subunit IF-1, IF-2 and IF-3 are released leaving the mature 70S translation initiation complex. In Arabidopsis thaliana (Mouse-ear cress), this protein is Translation initiation factor IF-1, chloroplastic.